Consider the following 624-residue polypeptide: DNA mismatch repair protein MutL (624 aa).

The segment at 355–377 is disordered; it reads EESAPERKLPEKTPEPSYSPMKL. Positions 358–368 are enriched in basic and acidic residues; the sequence is APERKLPEKTP.

It belongs to the DNA mismatch repair MutL/HexB family.

Its function is as follows. This protein is involved in the repair of mismatches in DNA. It is required for dam-dependent methyl-directed DNA mismatch repair. May act as a 'molecular matchmaker', a protein that promotes the formation of a stable complex between two or more DNA-binding proteins in an ATP-dependent manner without itself being part of a final effector complex. The polypeptide is DNA mismatch repair protein MutL (Bacillus velezensis (strain DSM 23117 / BGSC 10A6 / LMG 26770 / FZB42) (Bacillus amyloliquefaciens subsp. plantarum)).